Reading from the N-terminus, the 332-residue chain is MDFLALPKIDLHCHLDGSVRPDTIIDLAKQYNIELPEDRDAVVQSLTVPEDCKNLDEYLACFSLPLQVMQTEEAIERISFELYEDAALENVKYLEVRFAPILHVNKGLSLDTIIASAVKGMKRAEEKYDIKGNYIMSVLRMFPKDSIKDVIDAGQPYLGKGVVAFDIAGGEKPGFCAEFPEYTQYALEKGYRITVHAGEQWHGQNVYDAVTMLDAERIGHGVHIQGNEDAYNIVKEKQVALETCPTSNVQTKCIHQFSDHPIAEFKKDGIVVTINTDNRTVSNTTMTNEVKRVCETFGLTKEDYVEIYKYSVESAFASDEVKQHLMGFVEQI.

2 residues coordinate Zn(2+): His12 and His14. Substrate is bound by residues His14, Asp16, and Gly169. Zn(2+) is bound at residue His196. Glu199 (proton donor) is an active-site residue. Asp277 is a binding site for Zn(2+).

This sequence belongs to the metallo-dependent hydrolases superfamily. Adenosine and AMP deaminases family. Adenosine deaminase subfamily. Zn(2+) is required as a cofactor.

The enzyme catalyses adenosine + H2O + H(+) = inosine + NH4(+). The catalysed reaction is 2'-deoxyadenosine + H2O + H(+) = 2'-deoxyinosine + NH4(+). In terms of biological role, catalyzes the hydrolytic deamination of adenosine and 2-deoxyadenosine. This is Adenosine deaminase from Vibrio atlanticus (strain LGP32) (Vibrio splendidus (strain Mel32)).